We begin with the raw amino-acid sequence, 572 residues long: Proline--tRNA ligase (572 aa).

Belongs to the class-II aminoacyl-tRNA synthetase family. ProS type 1 subfamily. In terms of assembly, homodimer.

It localises to the cytoplasm. It catalyses the reaction tRNA(Pro) + L-proline + ATP = L-prolyl-tRNA(Pro) + AMP + diphosphate. Functionally, catalyzes the attachment of proline to tRNA(Pro) in a two-step reaction: proline is first activated by ATP to form Pro-AMP and then transferred to the acceptor end of tRNA(Pro). As ProRS can inadvertently accommodate and process non-cognate amino acids such as alanine and cysteine, to avoid such errors it has two additional distinct editing activities against alanine. One activity is designated as 'pretransfer' editing and involves the tRNA(Pro)-independent hydrolysis of activated Ala-AMP. The other activity is designated 'posttransfer' editing and involves deacylation of mischarged Ala-tRNA(Pro). The misacylated Cys-tRNA(Pro) is not edited by ProRS. This chain is Proline--tRNA ligase, found in Escherichia fergusonii (strain ATCC 35469 / DSM 13698 / CCUG 18766 / IAM 14443 / JCM 21226 / LMG 7866 / NBRC 102419 / NCTC 12128 / CDC 0568-73).